The primary structure comprises 221 residues: Interleukin-12 subunit alpha (221 aa).

The signal sequence occupies residues 1 to 25 (MCPLRSLLLISTLVLLHHLPHLSLG). 3 disulfide bridges follow: cysteine 39-cysteine 112, cysteine 66-cysteine 198, and cysteine 87-cysteine 125. Asparagine 95 carries N-linked (GlcNAc...) asparagine glycosylation.

This sequence belongs to the IL-6 superfamily. Heterodimer with IL12B; disulfide-linked. This heterodimer is known as interleukin IL-12. Heterodimer with EBI3/IL27B; not disulfide-linked. This heterodimer is known as interleukin IL-35. Interacts with NBR1; this interaction promotes IL-12 secretion.

It is found in the secreted. Its function is as follows. Heterodimerizes with IL12B to form the IL-12 cytokine or with EBI3/IL27B to form the IL-35 cytokine. IL-12 is primarily produced by professional antigen-presenting cells (APCs) such as B-cells and dendritic cells (DCs) as well as macrophages and granulocytes and regulates T-cell and natural killer-cell responses, induces the production of interferon-gamma (IFN-gamma), favors the differentiation of T-helper 1 (Th1) cells and is an important link between innate resistance and adaptive immunity. Mechanistically, exerts its biological effects through a receptor composed of IL12R1 and IL12R2 subunits. Binding to the receptor results in the rapid tyrosine phosphorylation of a number of cellular substrates including the JAK family kinases TYK2 and JAK2. In turn, recruited STAT4 gets phosphorylated and translocates to the nucleus where it regulates cytokine/growth factor responsive genes. As part of IL-35, plays essential roles in maintaining the immune homeostasis of the liver microenvironment and also functions as an immune-suppressive cytokine. Mediates biological events through unconventional receptors composed of IL12RB2 and gp130/IL6ST heterodimers or homodimers. Signaling requires the transcription factors STAT1 and STAT4, which form a unique heterodimer that binds to distinct DNA sites. This Capra hircus (Goat) protein is Interleukin-12 subunit alpha (IL12A).